The primary structure comprises 216 residues: Peroxiredoxin (216 aa).

Positions 2–158 (VVIGEKFPEV…ILRLVKALKI (157 aa)) constitute a Thioredoxin domain. Cys-46 (cysteine sulfenic acid (-SOH) intermediate) is an active-site residue. Arg-121 is a binding site for substrate. A disulfide bridge links Cys-205 with Cys-211.

It belongs to the peroxiredoxin family. Prx6 subfamily. As to quaternary structure, homodecamer. Pentamer of dimers that assemble into a ring structure.

The protein resides in the cytoplasm. The catalysed reaction is a hydroperoxide + [thioredoxin]-dithiol = an alcohol + [thioredoxin]-disulfide + H2O. Thiol-specific peroxidase that catalyzes the reduction of hydrogen peroxide and organic hydroperoxides to water and alcohols, respectively. Plays a role in cell protection against oxidative stress by detoxifying peroxides. The chain is Peroxiredoxin from Pyrococcus abyssi (strain GE5 / Orsay).